We begin with the raw amino-acid sequence, 698 residues long: Elongation factor G 1 (698 aa).

One can recognise a tr-type G domain in the interval 8 to 290 (ERYRNIGIVA…AVVDFLPAPI (283 aa)). GTP-binding positions include 17–24 (AHVDAGKT), 88–92 (DTPGH), and 142–145 (NKMD).

This sequence belongs to the TRAFAC class translation factor GTPase superfamily. Classic translation factor GTPase family. EF-G/EF-2 subfamily.

It localises to the cytoplasm. Its function is as follows. Catalyzes the GTP-dependent ribosomal translocation step during translation elongation. During this step, the ribosome changes from the pre-translocational (PRE) to the post-translocational (POST) state as the newly formed A-site-bound peptidyl-tRNA and P-site-bound deacylated tRNA move to the P and E sites, respectively. Catalyzes the coordinated movement of the two tRNA molecules, the mRNA and conformational changes in the ribosome. The sequence is that of Elongation factor G 1 from Shewanella frigidimarina (strain NCIMB 400).